A 178-amino-acid chain; its full sequence is Signal peptidase complex subunit 2 (178 aa).

Residues Met1 to Ala37 are Cytoplasmic-facing. A helical membrane pass occupies residues Leu38 to Phe58. At Leu59–Gln67 the chain is on the lumenal side. A helical membrane pass occupies residues Ile68–Tyr88. The Cytoplasmic segment spans residues Phe89 to Glu178.

Belongs to the SPCS2 family. In terms of assembly, component of the signal peptidase complex (SPC) composed of a catalytic subunit SEC11 and three accessory subunits SPC1, SPC2 and SPC3. The complex induces a local thinning of the ER membrane which is used to measure the length of the signal peptide (SP) h-region of protein substrates. This ensures the selectivity of the complex towards h-regions shorter than 18-20 amino acids. SPC associates with the translocon complex. Interacts with SBH1 and SEB2/SBH2.

It localises to the endoplasmic reticulum membrane. Functionally, component of the signal peptidase complex (SPC) which catalyzes the cleavage of N-terminal signal sequences from nascent proteins as they are translocated into the lumen of the endoplasmic reticulum. Enhances the enzymatic activity of SPC and facilitates the interactions between different components of the translocation site. This Saccharomyces cerevisiae (strain ATCC 204508 / S288c) (Baker's yeast) protein is Signal peptidase complex subunit 2 (SPC2).